The following is a 139-amino-acid chain: Probable disulfide formation protein C (139 aa).

Residues 8–27 form a helical membrane-spanning segment; it reads EYALLTAWGASFIATLGSLY. Cys-37 and Cys-40 are oxidised to a cystine. The next 2 membrane-spanning stretches (helical) occupy residues 42 to 61 and 68 to 85; these read YQRIFMYPFVLWLGIAVAKK and YSLPIASIGACISLYHYA. A disulfide bridge connects residues Cys-99 and Cys-104. Residues 113-135 traverse the membrane as a helical segment; it reads GFVTIPFLALIGFITIAVCSFIV.

It belongs to the DsbB family. BdbC subfamily.

It is found in the cell membrane. Its function is as follows. Required for disulfide bond formation in some proteins. The polypeptide is Probable disulfide formation protein C (Bacillus cereus (strain ATCC 14579 / DSM 31 / CCUG 7414 / JCM 2152 / NBRC 15305 / NCIMB 9373 / NCTC 2599 / NRRL B-3711)).